The sequence spans 433 residues: Chitinase-like protein EN03 (433 aa).

An N-terminal signal peptide occupies residues M1 to A16. The region spanning S23 to L433 is the GH18 domain. C27 and C54 form a disulfide bridge. A glycan (N-linked (GlcNAc...) asparagine) is linked at N220. A disulfide bridge links C337 with C418.

The protein belongs to the glycosyl hydrolase 18 family. IDGF subfamily.

It is found in the secreted. In Bombyx mori (Silk moth), this protein is Chitinase-like protein EN03.